The primary structure comprises 318 residues: Protein-L-histidine N-pros-methyltransferase (318 aa).

A signal peptide spans 1–18 (MRLLAGWLCLSLASVWLA). Asparagine 35 is a glycosylation site (N-linked (GlcNAc...) asparagine). S-adenosyl-L-homocysteine contacts are provided by glutamate 174, asparagine 210, and tyrosine 295.

This sequence belongs to the METTL9 family.

It localises to the endoplasmic reticulum. The protein resides in the mitochondrion. The enzyme catalyses L-histidyl-[protein] + S-adenosyl-L-methionine = N(pros)-methyl-L-histidyl-[protein] + S-adenosyl-L-homocysteine + H(+). In terms of biological role, protein-histidine N-methyltransferase that specifically catalyzes 1-methylhistidine (pros-methylhistidine) methylation of target proteins. Specifically methylates the second His of proteins with a His-x-His (HxH) motif (where 'x' is preferably a small amino acid), while exploiting the first one as a recognition signature. Catalyzes methylation of target proteins such as S100A9, NDUFB3, SLC39A5, SLC39A7, ARMC6 and DNAJB12; 1-methylhistidine modification may affect the binding of zinc and other metals to its target proteins. Constitutes the main methyltransferase for the 1-methylhistidine modification in cell. This chain is Protein-L-histidine N-pros-methyltransferase, found in Bos taurus (Bovine).